A 380-amino-acid chain; its full sequence is Putative 12-oxophytodienoate reductase 4 (380 aa).

FMN contacts are provided by residues 36–38 (PLT), Ala69, and Gln111. 183–186 (HGAH) provides a ligand contact to substrate. The active-site Proton donor is the Tyr188. Arg235 serves as a coordination point for FMN. Arg276 lines the substrate pocket. Residues Gly306 and 327–328 (GR) contribute to the FMN site.

It belongs to the NADH:flavin oxidoreductase/NADH oxidase family. The cofactor is FMN.

Putative oxophytodienoate reductase that may be involved in the biosynthesis or metabolism of oxylipin signaling molecules. The polypeptide is Putative 12-oxophytodienoate reductase 4 (OPR4) (Oryza sativa subsp. japonica (Rice)).